We begin with the raw amino-acid sequence, 209 residues long: Large ribosomal subunit protein uL4 (209 aa).

This sequence belongs to the universal ribosomal protein uL4 family. As to quaternary structure, part of the 50S ribosomal subunit.

One of the primary rRNA binding proteins, this protein initially binds near the 5'-end of the 23S rRNA. It is important during the early stages of 50S assembly. It makes multiple contacts with different domains of the 23S rRNA in the assembled 50S subunit and ribosome. In terms of biological role, forms part of the polypeptide exit tunnel. This Borrelia duttonii (strain Ly) protein is Large ribosomal subunit protein uL4.